The sequence spans 839 residues: MLKQISTTTKKEPWVNLSLLMVHNSFLDINYFWTTNLSIHKYGNYLVNNLNKAQWNTLSSVLQLKKAPHSGFLWTDQHNYIPLHRVKTNLCEKIELAAVQQSHPFHQTIHDFLRQSTCPKKRQRLIEKLQIPNELRWFLGFNALKKLSQFVVFELDNTNKLTSETLSQFFTTKFVNKVYFNQIQFEYNNFVGLLEDHERDLVEFSTHFFNSFFEQPDHLTKSFFEQYYALTRQRERLLHNLKVQSYETKHGVNTYFENLQITRAQQQANQLKRAFKKQQRNSVQLINRFMSSLWWSQTKIKFKSIFNFYKTRILEKRIVAKRIQIKIWLLKELKQMRLLNPDLLVSTIAESERLVEQLMSNIQRLYQQILQLKPGQSLNWKYQAISFELEKLTKPIVLTHDAVIGFLIKSRLAFLQEYAKGLNRCEQHNKLVNELKQNVLLNQNQYKGEVSQSYSVVNQKAVFKGFIQTVKAALNYTKLKHTLDPFNLMNIVQERCFEQLLTTYEKLDWTKYELNQLYFVCRALWTNLHKQTQHFFTKYQFITHGVVDFVFNQGRNQTQFASLKANLNRDWNSPKWKLLVNKTVNKYFEANLHHPQAYLLLPNRNATTLTEANTTTINQLNLKTQLKQWRAHYHLLLQDIRLIQWLYKKEIKQKQQQIKALLKNYGTLNKLLNTQISKVNNVVRKTFFVDSEECDLNRLQASNKLHFNLLNAMVNVISFCLKKCRQNPKKLNRTANLKMLLDNTFKNGIPSWMIFSDLNKINTKQRFKLYLLFKLLLHPQLVLVDSFVNFNKHTYNFTRGLLIAHQNQQGIAYLFNDPHNNLVKDFFTQTINFETRAKN.

This is an uncharacterized protein from Mycoplasma pneumoniae (strain ATCC 29342 / M129 / Subtype 1) (Mycoplasmoides pneumoniae).